The sequence spans 158 residues: uncharacterized protein (158 aa).

Helical transmembrane passes span 45–65, 76–96, and 106–126; these read GIFFQVVGAILVFGAYLPAVI, LAIGMWIISIAGLGLLAIFAW, and FILVALSETLSCIASIIVFAL.

It to U.parvum UU007, UU041 and UU042.

The protein localises to the cell membrane. This is an uncharacterized protein from Ureaplasma parvum serovar 3 (strain ATCC 700970).